The following is a 176-amino-acid chain: Late lactation protein A (176 aa).

Positions 1–18 (MRVLFLTISLSLFSIIHA) are cleaved as a signal peptide. Cys78 and Cys171 are oxidised to a cystine.

The protein belongs to the calycin superfamily. Lipocalin family. As to expression, mammary gland specific. Secreted in milk.

Its subcellular location is the secreted. Its function is as follows. Probably serves a role in the transport of a small ligand released during the hydrolysis of milk fat. The polypeptide is Late lactation protein A (LLPA) (Notamacropus eugenii (Tammar wallaby)).